Reading from the N-terminus, the 497-residue chain is Cytochrome P450 71A16 (497 aa).

Residues 1-21 (MEMMILISLCLTTFLTILLFF) traverse the membrane as a helical segment. Residue C439 participates in heme binding.

It belongs to the cytochrome P450 family. The cofactor is heme.

The protein resides in the membrane. Its function is as follows. Possesses triterpene oxidizing activity. Catalyzes the C23 hydroxylation of marneral to form 23-hydroxymarneral. Catalyzes the C23 hydroxylation of marnerol to form 23-hydroxymarnerol. This chain is Cytochrome P450 71A16 (CYP71A16), found in Arabidopsis thaliana (Mouse-ear cress).